A 227-amino-acid polypeptide reads, in one-letter code: NAD(P)H-quinone oxidoreductase subunit K, chloroplastic (227 aa).

[4Fe-4S] cluster contacts are provided by cysteine 43, cysteine 44, cysteine 108, and cysteine 139.

Belongs to the complex I 20 kDa subunit family. In terms of assembly, NDH is composed of at least 16 different subunits, 5 of which are encoded in the nucleus. Requires [4Fe-4S] cluster as cofactor.

It localises to the plastid. Its subcellular location is the chloroplast thylakoid membrane. It catalyses the reaction a plastoquinone + NADH + (n+1) H(+)(in) = a plastoquinol + NAD(+) + n H(+)(out). The catalysed reaction is a plastoquinone + NADPH + (n+1) H(+)(in) = a plastoquinol + NADP(+) + n H(+)(out). Functionally, NDH shuttles electrons from NAD(P)H:plastoquinone, via FMN and iron-sulfur (Fe-S) centers, to quinones in the photosynthetic chain and possibly in a chloroplast respiratory chain. The immediate electron acceptor for the enzyme in this species is believed to be plastoquinone. Couples the redox reaction to proton translocation, and thus conserves the redox energy in a proton gradient. This chain is NAD(P)H-quinone oxidoreductase subunit K, chloroplastic, found in Drimys granadensis.